Consider the following 425-residue polypeptide: Adenylosuccinate synthetase (425 aa).

GTP is bound by residues 12 to 18 and 40 to 42; these read GDEGKGK and GHT. Aspartate 13 functions as the Proton acceptor in the catalytic mechanism. Mg(2+) contacts are provided by aspartate 13 and glycine 40. Residues 13 to 16, 38 to 41, threonine 130, arginine 144, glutamine 225, threonine 240, and arginine 304 contribute to the IMP site; these read DEGK and NAGH. Histidine 41 serves as the catalytic Proton donor. 300–306 is a substrate binding site; sequence ATTGRPR. Residues arginine 306, 332-334, and 414-416 each bind GTP; these read KLD and SVG.

Belongs to the adenylosuccinate synthetase family. In terms of assembly, homodimer. Requires Mg(2+) as cofactor.

It is found in the cytoplasm. The enzyme catalyses IMP + L-aspartate + GTP = N(6)-(1,2-dicarboxyethyl)-AMP + GDP + phosphate + 2 H(+). Its pathway is purine metabolism; AMP biosynthesis via de novo pathway; AMP from IMP: step 1/2. In terms of biological role, plays an important role in the de novo pathway of purine nucleotide biosynthesis. Catalyzes the first committed step in the biosynthesis of AMP from IMP. The chain is Adenylosuccinate synthetase from Desulfovibrio desulfuricans (strain ATCC 27774 / DSM 6949 / MB).